We begin with the raw amino-acid sequence, 391 residues long: L-tryptophan--pyruvate aminotransferase 1 (391 aa).

Residues Tyr-58, 100 to 101 (ST), Asn-168, 191 to 194 (DFAY), 214 to 217 (TFSK), and Arg-225 each bind pyridoxal 5'-phosphate. Lys-217 bears the N6-(pyridoxal phosphate)lysine mark.

It belongs to the alliinase family. Pyridoxal 5'-phosphate is required as a cofactor. Expressed at the leaf margin and in the vasculature of emerging young leaves. Expressed in the quiescent center and in the vasculature of root tips. Detected in the shoot apical meristem, stems, sepals, stamen filaments, the shoot and root junction, the stigma and the base of the silique.

It localises to the cytoplasm. It carries out the reaction L-tryptophan + 2-oxoglutarate = indole-3-pyruvate + L-glutamate. The catalysed reaction is L-tryptophan + pyruvate = indole-3-pyruvate + L-alanine. The protein operates within plant hormone metabolism; auxin biosynthesis. With respect to regulation, inhibited by L-kynurenine. L-tryptophan aminotransferase involved in auxin (IAA) biosynthesis. Can convert L-tryptophan and pyruvate to indole-3-pyruvic acid (IPA) and alanine. Catalyzes the first step in IPA branch of the auxin biosynthetic pathway. Required for auxin production to initiate multiple change in growth in response to environmental and developmental cues. It is also active with phenylalanine, tyrosine, leucine, alanine, methionine and glutamine. Both TAA1 and TAR2 are required for maintaining proper auxin levels in roots, while TAA1, TAR1 and TAR2 are required for proper embryo patterning. Involved in the maintenance of the root stem cell niches and required for shade avoidance. The polypeptide is L-tryptophan--pyruvate aminotransferase 1 (TAA1) (Arabidopsis thaliana (Mouse-ear cress)).